A 627-amino-acid chain; its full sequence is Plastin-3 (627 aa).

2 EF-hand domains span residues 8-43 (EELE…ANLP) and 48-83 (KVRE…LKSG). Aspartate 21, asparagine 23, asparagine 25, glutamate 32, aspartate 61, asparagine 63, aspartate 65, methionine 67, and glutamate 72 together coordinate Ca(2+). Actin-binding stretches follow at residues 105–378 (TSEL…ALTK) and 379–624 (PENQ…GRGM). 4 Calponin-homology (CH) domains span residues 119-235 (EEER…KIGL), 263-374 (LSPE…NKYP), 393-503 (TREE…RRYT), and 515-624 (KVND…GRGM).

The protein localises to the cytoplasm. Actin-bundling protein. This Danio rerio (Zebrafish) protein is Plastin-3 (pls3).